Reading from the N-terminus, the 461-residue chain is Zinc finger protein ZFP2 (461 aa).

C2H2-type zinc fingers lie at residues 102 to 124, 130 to 152, 158 to 180, 186 to 208, 214 to 236, 242 to 264, 270 to 292, 298 to 320, 326 to 348, 354 to 376, 382 to 404, 410 to 432, and 438 to 460; these read YECNQCSKTFSQSSSLLKHQRIH, YKCNVCGKHFIERSSLTVHQRIH, YKCNECGKAFSQSMNLTVHQRTH, YQCKECGKAFHKNSSLIQHERIH, YKCNECGKAFTQSMNLTVHQRTH, YECNECGKAFSQSMHLIVHQRSH, YECSQCGKAFSKSSTLTLHQRNH, YKCNKCGKSFSQSTYLIEHQRLH, FECNECGKAFSKNSSLTQHRRIH, YECMVCGKHFTGRSSLTVHQVIH, YECNECGKAFSQSAYLIEHQRIH, YECDQCGKAFIKNSSLTVHQRTH, and YQCNECGKAFSRSTNLTRHQRTH.

This sequence belongs to the krueppel C2H2-type zinc-finger protein family.

Its subcellular location is the nucleus. In terms of biological role, probable transcription factor involved in neuronal differentiation and/or phenotypic maintenance. The protein is Zinc finger protein ZFP2 (ZFP2) of Homo sapiens (Human).